The following is a 1023-amino-acid chain: Lon protease homolog (1023 aa).

Position 515–522 (515–522 (GPPGVGKT)) interacts with ATP. One can recognise a Lon proteolytic domain in the interval 810 to 1003 (TNMIGVINGL…IEIITDPNVI (194 aa)). The active site involves Ser-906.

This sequence belongs to the peptidase S16 family.

The chain is Lon protease homolog from Acanthamoeba polyphaga (Amoeba).